Consider the following 208-residue polypeptide: MSQGNLYILSAPSGAGKSSLISALLASDSSTQKMVSVSHTTRAPRPGEVEGVHYYFVSKEEFESLIEQDLFLEYAKVFGGNYYGTSLPAIEENLAKGIDVFLDIDWQGAQQIRKKVPSVKSIFILPPSLPELERRLIGRGQDSEEVIAERMSKAISEISHYDEYDYVIVNDDFEKTLKDLQSILQSERLTKDYQQKQNAMLIQQLLAK.

The 182-residue stretch at 4–185 folds into the Guanylate kinase-like domain; that stretch reads GNLYILSAPS…TLKDLQSILQ (182 aa). 11–18 is an ATP binding site; the sequence is APSGAGKS.

The protein belongs to the guanylate kinase family.

Its subcellular location is the cytoplasm. It carries out the reaction GMP + ATP = GDP + ADP. Its function is as follows. Essential for recycling GMP and indirectly, cGMP. The protein is Guanylate kinase of Haemophilus influenzae (strain 86-028NP).